Consider the following 72-residue polypeptide: Exodeoxyribonuclease 7 small subunit (72 aa).

It belongs to the XseB family. As to quaternary structure, heterooligomer composed of large and small subunits.

Its subcellular location is the cytoplasm. The catalysed reaction is Exonucleolytic cleavage in either 5'- to 3'- or 3'- to 5'-direction to yield nucleoside 5'-phosphates.. Functionally, bidirectionally degrades single-stranded DNA into large acid-insoluble oligonucleotides, which are then degraded further into small acid-soluble oligonucleotides. This Chlamydia trachomatis serovar D (strain ATCC VR-885 / DSM 19411 / UW-3/Cx) protein is Exodeoxyribonuclease 7 small subunit.